Reading from the N-terminus, the 537-residue chain is Phosphoenolpyruvate carboxykinase (ATP) (537 aa).

Positions 64, 204, and 210 each coordinate substrate. Residues lysine 210, histidine 229, and 245 to 253 each bind ATP; that span reads GLSGTGKTT. The Mn(2+) site is built by lysine 210 and histidine 229. Aspartate 266 contributes to the Mn(2+) binding site. ATP-binding positions include glutamate 294, arginine 330, 446–447, and threonine 452; that span reads RI. A substrate-binding site is contributed by arginine 330.

This sequence belongs to the phosphoenolpyruvate carboxykinase (ATP) family. As to quaternary structure, monomer. The cofactor is Mn(2+).

The protein resides in the cytoplasm. The catalysed reaction is oxaloacetate + ATP = phosphoenolpyruvate + ADP + CO2. The protein operates within carbohydrate biosynthesis; gluconeogenesis. Functionally, involved in the gluconeogenesis. Catalyzes the conversion of oxaloacetate (OAA) to phosphoenolpyruvate (PEP) through direct phosphoryl transfer between the nucleoside triphosphate and OAA. The protein is Phosphoenolpyruvate carboxykinase (ATP) of Aliivibrio fischeri (strain ATCC 700601 / ES114) (Vibrio fischeri).